The following is a 152-amino-acid chain: Protein-export protein SecB (152 aa).

The protein belongs to the SecB family. Homotetramer, a dimer of dimers. One homotetramer interacts with 1 SecA dimer.

It is found in the cytoplasm. One of the proteins required for the normal export of preproteins out of the cell cytoplasm. It is a molecular chaperone that binds to a subset of precursor proteins, maintaining them in a translocation-competent state. It also specifically binds to its receptor SecA. The sequence is that of Protein-export protein SecB from Verminephrobacter eiseniae (strain EF01-2).